Reading from the N-terminus, the 356-residue chain is Phosphoserine aminotransferase (356 aa).

Arg-41 is an L-glutamate binding site. Pyridoxal 5'-phosphate-binding positions include 75 to 76, Trp-99, Thr-147, Asp-166, and Gln-189; that span reads AS. Lys-190 is subject to N6-(pyridoxal phosphate)lysine. A pyridoxal 5'-phosphate-binding site is contributed by 231–232; sequence NT.

It belongs to the class-V pyridoxal-phosphate-dependent aminotransferase family. SerC subfamily. Homodimer. Requires pyridoxal 5'-phosphate as cofactor.

It localises to the cytoplasm. The enzyme catalyses O-phospho-L-serine + 2-oxoglutarate = 3-phosphooxypyruvate + L-glutamate. The catalysed reaction is 4-(phosphooxy)-L-threonine + 2-oxoglutarate = (R)-3-hydroxy-2-oxo-4-phosphooxybutanoate + L-glutamate. It participates in amino-acid biosynthesis; L-serine biosynthesis; L-serine from 3-phospho-D-glycerate: step 2/3. It functions in the pathway cofactor biosynthesis; pyridoxine 5'-phosphate biosynthesis; pyridoxine 5'-phosphate from D-erythrose 4-phosphate: step 3/5. In terms of biological role, catalyzes the reversible conversion of 3-phosphohydroxypyruvate to phosphoserine and of 3-hydroxy-2-oxo-4-phosphonooxybutanoate to phosphohydroxythreonine. This is Phosphoserine aminotransferase from Phocaeicola vulgatus (strain ATCC 8482 / DSM 1447 / JCM 5826 / CCUG 4940 / NBRC 14291 / NCTC 11154) (Bacteroides vulgatus).